Here is a 398-residue protein sequence, read N- to C-terminus: E3 ubiquitin-protein ligase ATL6 (398 aa).

Positions 1-29 are cleaved as a signal peptide; that stretch reads MRSSDHMAFAGVLPIVFLLILSSADLAAS. The chain crosses the membrane as a helical span at residues 50-70; the sequence is AVIVVILIAALFFMGFFSIYF. The RING-type; atypical zinc-finger motif lies at 128–170; it reads CAICLNEFEDDETLRLLPKCDHVFHPHCIDAWLEAHVTCPVCR. Ser-278 is subject to Phosphoserine. The disordered stretch occupies residues 368–398; sequence PRGGVNKDGEGTSVKSTGASGSTSGSVRLPV. Low complexity predominate over residues 378 to 398; the sequence is GTSVKSTGASGSTSGSVRLPV.

The protein belongs to the RING-type zinc finger family. ATL subfamily.

Its subcellular location is the membrane. It carries out the reaction S-ubiquitinyl-[E2 ubiquitin-conjugating enzyme]-L-cysteine + [acceptor protein]-L-lysine = [E2 ubiquitin-conjugating enzyme]-L-cysteine + N(6)-ubiquitinyl-[acceptor protein]-L-lysine.. The protein operates within protein modification; protein ubiquitination. In terms of biological role, E3 ubiquitin-protein ligase able to catalyze polyubiquitination with ubiquitin-conjugating enzyme E2 UBC8 in vitro. May be involved in the plant C/N response and the early steps of the plant defense signaling pathway. This Arabidopsis thaliana (Mouse-ear cress) protein is E3 ubiquitin-protein ligase ATL6 (ATL6).